We begin with the raw amino-acid sequence, 89 residues long: uncharacterized protein (89 aa).

A helical membrane pass occupies residues 39 to 61 (FVCFWSIWFWTGDISFSLLSMLV).

It localises to the membrane. This is an uncharacterized protein from Saccharomyces cerevisiae (strain ATCC 204508 / S288c) (Baker's yeast).